Here is a 119-residue protein sequence, read N- to C-terminus: Basic phospholipase A2 notechis II-5 (119 aa).

Intrachain disulfides connect cysteine 11–cysteine 71, cysteine 27–cysteine 118, cysteine 29–cysteine 45, cysteine 44–cysteine 99, cysteine 51–cysteine 92, cysteine 60–cysteine 85, and cysteine 78–cysteine 90. Ca(2+)-binding residues include tyrosine 28, glycine 30, and glycine 32. Histidine 48 is a catalytic residue. Aspartate 49 serves as a coordination point for Ca(2+). Aspartate 93 is a catalytic residue.

The protein belongs to the phospholipase A2 family. Group I subfamily. D49 sub-subfamily. Requires Ca(2+) as cofactor. As to expression, expressed by the venom gland.

Its subcellular location is the secreted. It carries out the reaction a 1,2-diacyl-sn-glycero-3-phosphocholine + H2O = a 1-acyl-sn-glycero-3-phosphocholine + a fatty acid + H(+). Snake venom phospholipase A2 (PLA2) that inhibits neuromuscular transmission by blocking acetylcholine release from the nerve termini. Notechis II-5 is less toxic than notexin but has a higher specific phospholipase activity. PLA2 catalyzes the calcium-dependent hydrolysis of the 2-acyl groups in 3-sn-phosphoglycerides. The polypeptide is Basic phospholipase A2 notechis II-5 (Notechis scutatus scutatus (Mainland tiger snake)).